The primary structure comprises 1241 residues: Dinoflagellate luciferase (1241 aa).

3 luciferase regions span residues 114–465 (KTGL…IKRD), 491–842 (DQGF…TKRD), and 868–1218 (EKGF…KKRD).

It belongs to the calycin superfamily. Luciferase family.

Its subcellular location is the cytoplasmic vesicle. It catalyses the reaction dinoflagellate luciferin + O2 = oxidized dinoflagellate luciferin + hnu + H2O + H(+). With respect to regulation, regulated by pH: upon acidification, at a pH of 6.3, dinoflagellate luciferin is released from luciferin-binding protein LBP, allowing the interaction between Dinoflagellate luciferase and its substrate luciferin. Its function is as follows. Emits blue light flashes with a wavelength of 475 nm during the night phase. The polypeptide is Dinoflagellate luciferase (Lingulodinium polyedra (Dinoflagellate)).